The sequence spans 140 residues: Large ribosomal subunit protein uL11 (140 aa).

It belongs to the universal ribosomal protein uL11 family. In terms of assembly, part of the ribosomal stalk of the 50S ribosomal subunit. Interacts with L10 and the large rRNA to form the base of the stalk. L10 forms an elongated spine to which L12 dimers bind in a sequential fashion forming a multimeric L10(L12)X complex. One or more lysine residues are methylated.

In terms of biological role, forms part of the ribosomal stalk which helps the ribosome interact with GTP-bound translation factors. The polypeptide is Large ribosomal subunit protein uL11 (Syntrophobacter fumaroxidans (strain DSM 10017 / MPOB)).